The chain runs to 704 residues: Acetyl-coenzyme A synthetase 1 (704 aa).

Residues 239–242 (RGGK) and threonine 358 contribute to the CoA site. ATP is bound by residues 434-436 (GEP), 458-463 (DTYWQT), aspartate 550, and arginine 565. Serine 573 contributes to the CoA binding site. An ATP-binding site is contributed by arginine 576. A CoA-binding site is contributed by arginine 641. The short motif at 702–704 (VKL) is the Microbody targeting signal element.

This sequence belongs to the ATP-dependent AMP-binding enzyme family.

It localises to the microsome. The protein localises to the endoplasmic reticulum. The enzyme catalyses acetate + ATP + CoA = acetyl-CoA + AMP + diphosphate. This Candida glabrata (strain ATCC 2001 / BCRC 20586 / JCM 3761 / NBRC 0622 / NRRL Y-65 / CBS 138) (Yeast) protein is Acetyl-coenzyme A synthetase 1 (ACS1).